A 1052-amino-acid polypeptide reads, in one-letter code: Suppressor of RPS4-RLD 1 (1052 aa).

The residue at position 2 (Ala-2) is an N-acetylalanine. TPR repeat units follow at residues 39–72 (ILDI…EPFA) and 74–106 (QAFI…ALQQ). Residues 107–136 (TADVKQLLELEELLKDARREIDGILKSHAT) are a coiled coil. The disordered stretch occupies residues 131-181 (LKSHATESPQETPAYHSEKSDEKSDKLDNHESGASSNGNSHESSSELGEQS). Positions 146 to 161 (HSEKSDEKSDKLDNHE) are enriched in basic and acidic residues. The segment covering 162-181 (SGASSNGNSHESSSELGEQS) has biased composition (low complexity). 9 TPR repeats span residues 297–330 (VDFR…EPTY), 331–364 (PEAL…NPAA), 365–398 (SEAW…EPNS), 400–432 (DVLH…EKDN), 433–466 (KSAY…DSNY), 468–500 (EAWL…DNRV), 502–534 (KAYH…ENTI), 535–567 (ECLY…ELDA), and 569–591 (EKFV…ASKV). Positions 704 to 739 (STKGTTKNGKKNRRRERTNILSQNRGGAGCSSSSFS) are disordered. The helical transmembrane segment at 966–986 (GTAVTGFVVLLGLLLAANMEF) threads the bilayer.

As to quaternary structure, multimer. Interacts with EDS1. Interacts with SNC1 and RPS4. Interacts (via TPR domain) with SGT1 (via TPR domain). Interacts with the TCP transcription factors TCP8, TCP14, TCP15, TCP20, TCP22 and TCP23. In terms of tissue distribution, ubiquitous. Not detected in very young flowers and older siliques.

The protein localises to the nucleus. The protein resides in the cytoplasm. Its subcellular location is the perinuclear region. It is found in the membrane. It localises to the microsome. Negative regulator of effector-triggered immunity associated with the EDS1 resistance pathway. May localize its interactors to a microsomal membrane. May therefore negatively regulate RPS4 and SNC1 translocation to the nucleus. Contributes to the regulation of RPS2 and RPS4 protein levels and negatively regulates SNC1 stability. In Arabidopsis thaliana (Mouse-ear cress), this protein is Suppressor of RPS4-RLD 1.